Here is a 223-residue protein sequence, read N- to C-terminus: UPF0502 protein Avin_04790 (223 aa).

It belongs to the UPF0502 family.

The sequence is that of UPF0502 protein Avin_04790 from Azotobacter vinelandii (strain DJ / ATCC BAA-1303).